Consider the following 247-residue polypeptide: ATP synthase subunit a, chloroplastic (247 aa).

A run of 5 helical transmembrane segments spans residues 38–58 (QVLITSWVVIAILLGSTILVV), 95–115 (VPFIGTLFLFIFVSNWSGALL), 134–154 (INTTVALALLTSVAYFYAGIS), 199–219 (LVVVVLVSLVPLVVPIPVMFL), and 220–240 (GLFTSGIQALIFATLAAAYIG).

The protein belongs to the ATPase A chain family. As to quaternary structure, F-type ATPases have 2 components, CF(1) - the catalytic core - and CF(0) - the membrane proton channel. CF(1) has five subunits: alpha(3), beta(3), gamma(1), delta(1), epsilon(1). CF(0) has four main subunits: a, b, b' and c.

Its subcellular location is the plastid. It is found in the chloroplast thylakoid membrane. In terms of biological role, key component of the proton channel; it plays a direct role in the translocation of protons across the membrane. The sequence is that of ATP synthase subunit a, chloroplastic from Lotus japonicus (Lotus corniculatus var. japonicus).